The chain runs to 177 residues: tRNA (cytidine(56)-2'-O)-methyltransferase (177 aa).

S-adenosyl-L-methionine is bound by residues L83 and 108–112; that span reads GAEKV.

The protein belongs to the aTrm56 family. Homodimer.

The protein localises to the cytoplasm. It carries out the reaction cytidine(56) in tRNA + S-adenosyl-L-methionine = 2'-O-methylcytidine(56) in tRNA + S-adenosyl-L-homocysteine + H(+). Functionally, specifically catalyzes the AdoMet-dependent 2'-O-ribose methylation of cytidine at position 56 in tRNAs. The sequence is that of tRNA (cytidine(56)-2'-O)-methyltransferase from Nitrosopumilus maritimus (strain SCM1).